The sequence spans 336 residues: Probable long-chain-alcohol O-fatty-acyltransferase 8 (336 aa).

8 consecutive transmembrane segments (helical) span residues 7 to 27, 38 to 58, 59 to 79, 82 to 102, 117 to 135, 152 to 172, 228 to 248, and 284 to 304; these read SFVKVWGSAIISVSYCYYIPS, SVLPVCVLFLVLPLFFVFTIF, SSTTAFCLSILANFKLILFAF, GPLLPLPANLFRFICFTCLPI, WVFFCKAAIFGVLLNVHNY, LYLVLDVLLTIVNALLTIILG, MGCWTTFFVSGLIHELVYFYI, and PMLSRLITVGFLVVTGYFLFF.

The protein belongs to the wax synthase family.

The protein resides in the membrane. The catalysed reaction is a long chain fatty alcohol + a fatty acyl-CoA = a wax ester + CoA. In terms of biological role, catalyzes the final step in the synthesis of long-chain linear esters (waxes). This is Probable long-chain-alcohol O-fatty-acyltransferase 8 from Arabidopsis thaliana (Mouse-ear cress).